Here is a 38-residue protein sequence, read N- to C-terminus: ATP synthase subunit O, mitochondrial (38 aa).

It belongs to the ATPase delta chain family. In terms of assembly, F-type ATPases have 2 components, CF(1) - the catalytic core - and CF(0) - the membrane proton channel. CF(1) has five subunits: alpha(3), beta(3), gamma(1), delta(1), epsilon(1). CF(0) has three main subunits: a, b and c.

It localises to the mitochondrion. Its subcellular location is the mitochondrion inner membrane. In terms of biological role, mitochondrial membrane ATP synthase (F(1)F(0) ATP synthase or Complex V) produces ATP from ADP in the presence of a proton gradient across the membrane which is generated by electron transport complexes of the respiratory chain. F-type ATPases consist of two structural domains, F(1) - containing the extramembraneous catalytic core and F(0) - containing the membrane proton channel, linked together by a central stalk and a peripheral stalk. During catalysis, ATP synthesis in the catalytic domain of F(1) is coupled via a rotary mechanism of the central stalk subunits to proton translocation. Part of the complex F(0) domain and the peripheric stalk, which acts as a stator to hold the catalytic alpha(3)beta(3) subcomplex and subunit a/ATP6 static relative to the rotary elements. In Pisum sativum (Garden pea), this protein is ATP synthase subunit O, mitochondrial.